The sequence spans 407 residues: MHTSPMEQPGTGDAGGLNVYVVELSRQLAALGVEVEVFTRAVSSKLPTSAELAPGVTVRHVDAGPFEEIHREDLPAWLCAFTADVLRAEAGHEPGYFDVIHSHYWLSGQVALAVARRWGVPFVHTSHTLAKIKNGALAVGDRPEPPGRLLGEQEVIAGSTRLIASTADERGHLIDLYDADPDRVDVVAPGVDLETFRPGDPAQSRARLGLDRDGDLLLFVGRIQPLKAPDLLLHAAAELLRRDPTRRSRLTVAVVGGPSGSGLEQPDALVKLAADLGISDLVRFQPPAPQHELAHWYRAATAVVVPSHSESFGLVALEAQACGTPVVAAAVGGLRTAVADGVSGLLVAGRDPARYADTLDRLLRQPHWRSRLAAGAVGRAAGFGWSATARGVLRSYRHALSPAAVAV.

Residue H2 coordinates 1D-myo-inositol 3-phosphate. UDP-N-acetyl-alpha-D-glucosamine is bound by residues Q8–P9 and G16. 1D-myo-inositol 3-phosphate is bound by residues D13–N18, R71, Y104, T128, and R148. Residues R222 and K227 each coordinate UDP-N-acetyl-alpha-D-glucosamine. Positions 297, 298, and 300 each coordinate Mg(2+). UDP-N-acetyl-alpha-D-glucosamine-binding residues include E310 and E318. Residue T324 participates in Mg(2+) binding.

The protein belongs to the glycosyltransferase group 1 family. MshA subfamily. Homodimer.

It carries out the reaction 1D-myo-inositol 3-phosphate + UDP-N-acetyl-alpha-D-glucosamine = 1D-myo-inositol 2-acetamido-2-deoxy-alpha-D-glucopyranoside 3-phosphate + UDP + H(+). Functionally, catalyzes the transfer of a N-acetyl-glucosamine moiety to 1D-myo-inositol 3-phosphate to produce 1D-myo-inositol 2-acetamido-2-deoxy-glucopyranoside 3-phosphate in the mycothiol biosynthesis pathway. The sequence is that of D-inositol 3-phosphate glycosyltransferase from Frankia alni (strain DSM 45986 / CECT 9034 / ACN14a).